Reading from the N-terminus, the 232-residue chain is Ribonuclease P protein component 3 (232 aa).

This sequence belongs to the eukaryotic/archaeal RNase P protein component 3 family. In terms of assembly, consists of a catalytic RNA component and at least 4-5 protein subunits.

The protein resides in the cytoplasm. The catalysed reaction is Endonucleolytic cleavage of RNA, removing 5'-extranucleotides from tRNA precursor.. Functionally, part of ribonuclease P, a protein complex that generates mature tRNA molecules by cleaving their 5'-ends. This chain is Ribonuclease P protein component 3, found in Halobacterium salinarum (strain ATCC 29341 / DSM 671 / R1).